We begin with the raw amino-acid sequence, 840 residues long: Leucine--tRNA ligase (840 aa).

The 'HIGH' region signature appears at 44–55 (PYPSANGLHVGH). A 'KMSKS' region motif is present at residues 617-621 (KMSKS). Lysine 620 provides a ligand contact to ATP.

Belongs to the class-I aminoacyl-tRNA synthetase family.

It localises to the cytoplasm. The enzyme catalyses tRNA(Leu) + L-leucine + ATP = L-leucyl-tRNA(Leu) + AMP + diphosphate. The polypeptide is Leucine--tRNA ligase (Borreliella burgdorferi (strain ZS7) (Borrelia burgdorferi)).